Reading from the N-terminus, the 234-residue chain is Proteasome subunit beta (234 aa).

The disordered stretch occupies residues 1–35 (MNPDLNMNPHDSGRTDPYAPELGEIATDEGDGENV). Residues 1-39 (MNPDLNMNPHDSGRTDPYAPELGEIATDEGDGENVTKTG) constitute a propeptide, removed in mature form; by autocatalysis. The active-site Nucleophile is the T40.

Belongs to the peptidase T1B family. The 20S proteasome core is composed of 14 alpha and 14 beta subunits that assemble into four stacked heptameric rings, resulting in a barrel-shaped structure. The two inner rings, each composed of seven catalytic beta subunits, are sandwiched by two outer rings, each composed of seven alpha subunits. The catalytic chamber with the active sites is on the inside of the barrel. Has a gated structure, the ends of the cylinder being occluded by the N-termini of the alpha-subunits. Is capped at one or both ends by the proteasome regulatory ATPase, PAN.

It localises to the cytoplasm. It catalyses the reaction Cleavage of peptide bonds with very broad specificity.. The formation of the proteasomal ATPase PAN-20S proteasome complex, via the docking of the C-termini of PAN into the intersubunit pockets in the alpha-rings, triggers opening of the gate for substrate entry. Interconversion between the open-gate and close-gate conformations leads to a dynamic regulation of the 20S proteasome proteolysis activity. Its function is as follows. Component of the proteasome core, a large protease complex with broad specificity involved in protein degradation. This Halorhabdus utahensis (strain DSM 12940 / JCM 11049 / AX-2) protein is Proteasome subunit beta.